The chain runs to 652 residues: Engulfment and cell motility protein 3 (652 aa).

The ELMO domain occupies 307-479 (EQREQLQALR…VVREQLARTL (173 aa)).

Probably interacts directly with the SH3-domain of DOCK1 via its SH3-binding site. Part of a complex with DOCK1 and RAC1. Interacts with ADGRB3.

It localises to the cytoplasm. Functionally, involved in cytoskeletal rearrangements required for phagocytosis of apoptotic cells and cell motility. Acts in association with DOCK1 and CRK. Was initially proposed to be required in complex with DOCK1 to activate Rac Rho small GTPases. May enhance the guanine nucleotide exchange factor (GEF) activity of DOCK1. In Bos taurus (Bovine), this protein is Engulfment and cell motility protein 3 (ELMO3).